The following is a 385-amino-acid chain: MNSLDLPKPPHETRVVVAMSGGVDSSVVAGLLKREGYDVVGVTLQLYDHGAATHRKGACCAGRDIHDARAVAETLGIPHYVLDYEDRFRESVIDRFAESYLSGETPIPCVECNRSVKFRDLLGLARDLGAEALATGHYVASRARPEGGRALYRALDPARDQSYFLYATTPEQLAYLRFPLGERPKDETRALARELGLAVADKADSQDICFVPQGGYADVIAKLRPEATRPGEIVDLDGRRLGEHEGIIHYTVGQRRGLKLSAGEPLYVVRLEPETARVVVGPRAALATRRIRLTDLNWLGDGAPEDIAERPVAVRVRSTREPRPARLSWNAAEACAEVELLVPEDGVSPGQACVIYADDDPRAQVLGGGTIRRIGALQAGAAEAA.

ATP is bound by residues 18-25 and L44; that span reads AMSGGVDS. The Nucleophile role is filled by C112. C112 and C209 are joined by a disulfide. Position 136 (G136) interacts with ATP. The interval 159-161 is interaction with tRNA; sequence RDQ. Residue C209 is the Cysteine persulfide intermediate of the active site.

Belongs to the MnmA/TRMU family.

Its subcellular location is the cytoplasm. It carries out the reaction S-sulfanyl-L-cysteinyl-[protein] + uridine(34) in tRNA + AH2 + ATP = 2-thiouridine(34) in tRNA + L-cysteinyl-[protein] + A + AMP + diphosphate + H(+). Its function is as follows. Catalyzes the 2-thiolation of uridine at the wobble position (U34) of tRNA, leading to the formation of s(2)U34. The polypeptide is tRNA-specific 2-thiouridylase MnmA (Methylorubrum extorquens (strain PA1) (Methylobacterium extorquens)).